The sequence spans 28 residues: Ribosome-inactivating protein pleuturegin (28 aa).

Belongs to the ribosome-inactivating protein family.

The catalysed reaction is Endohydrolysis of the N-glycosidic bond at one specific adenosine on the 28S rRNA.. Functionally, inhibits protein synthesis in animal cells. Does not possess ribonuclease activity. This Pleurotus tuber-regium (King tuber oyster mushroom) protein is Ribosome-inactivating protein pleuturegin.